A 673-amino-acid chain; its full sequence is Fatty acyl-CoA synthetase B (673 aa).

The signal sequence occupies residues 1-18; that stretch reads MINNWLAVGLLVVSGILA. An N-linked (GlcNAc...) asparagine glycan is attached at Asn267.

Belongs to the ATP-dependent AMP-binding enzyme family.

It is found in the endoplasmic reticulum. The enzyme catalyses a long-chain fatty acid + ATP + CoA = a long-chain fatty acyl-CoA + AMP + diphosphate. Its function is as follows. Long chain fatty acid acyl-CoA synthetases catalyze the formation of a thiester bond between a free fatty acid and coenzyme A during fatty acid metabolic process. This chain is Fatty acyl-CoA synthetase B (fcsB), found in Dictyostelium discoideum (Social amoeba).